The following is a 226-amino-acid chain: Ribonuclease 3 (226 aa).

The RNase III domain maps to 5–127 (IFQRGDPIGH…IVAAIYLDCG (123 aa)). Residue glutamate 40 coordinates Mg(2+). The active site involves aspartate 44. Residues aspartate 113 and glutamate 116 each coordinate Mg(2+). Glutamate 116 is an active-site residue. Positions 154 to 224 (DPKTRLQEWL…ATLVIAQLDS (71 aa)) constitute a DRBM domain.

It belongs to the ribonuclease III family. Homodimer. It depends on Mg(2+) as a cofactor.

The protein resides in the cytoplasm. It carries out the reaction Endonucleolytic cleavage to 5'-phosphomonoester.. Its function is as follows. Digests double-stranded RNA. Involved in the processing of primary rRNA transcript to yield the immediate precursors to the large and small rRNAs (23S and 16S). Processes some mRNAs, and tRNAs when they are encoded in the rRNA operon. Processes pre-crRNA and tracrRNA of type II CRISPR loci if present in the organism. This Xanthomonas oryzae pv. oryzae (strain KACC10331 / KXO85) protein is Ribonuclease 3.